We begin with the raw amino-acid sequence, 181 residues long: Adenine phosphoribosyltransferase (181 aa).

This sequence belongs to the purine/pyrimidine phosphoribosyltransferase family. In terms of assembly, homodimer.

It localises to the cytoplasm. It carries out the reaction AMP + diphosphate = 5-phospho-alpha-D-ribose 1-diphosphate + adenine. Its pathway is purine metabolism; AMP biosynthesis via salvage pathway; AMP from adenine: step 1/1. Catalyzes a salvage reaction resulting in the formation of AMP, that is energically less costly than de novo synthesis. This is Adenine phosphoribosyltransferase from Shewanella woodyi (strain ATCC 51908 / MS32).